Here is a 611-residue protein sequence, read N- to C-terminus: MSEVKRNISLRNSTNIFTSTFSLSSNNVPKPLIGESVIKYGDEAFVYGGRDALNAQLVNDMYVVDLNTCSWKQVEYQGNQKPIPRYFHSGDLWNNKLIFFGGMGFNDDTKCLYVLNDIDIYDIETKQWSHIPGMITENQTNDDAKEVNGSDVDEKSKHLYPSARYGHLHCVLDHYLIIFCGQDLSNSYIEEINIFDLDSGKWVFKSLFNHHCGIYRSNCVVINKDSEFLQMCRPINTTQDSNEHSIGSLFFYLNYNFVNVKRQVIYLELFELDTAESEKKSAALAKDNNQSFRFLELDVTEKFLSSAMPPGLRFPAVNILGDNLILSGIYLTSSRQAFVLWVYSLDKELWLQLDMLGVLNHGSWFKCLVLDCTNRFVVFGNKTRKLTQDYNLRQSNYDHIVFIELEGYGVYRKPQMGRVTERSEQLGKLLLNGISDMEILTIERMHIPCLSRMLYKRWPAFQKIMDRAVEKNQEAFQAEVSQLGPQLTDLPFSSIHSTGSRALYMPYSFETCSAFLHYIYCGTLNGSYCTAKNLCNLLILCKGFEGLETFFAYIVHLLHGVLNRNNVKLIYETAALTGAKGLQLRALRRIARIEQGGTAISPTSPLPNLDD.

Kelch repeat units lie at residues 43–91 (EAFV…HSGD), 96–149 (KLIF…EVNG), and 175–224 (YLII…VINK). Phosphoserine is present on Ser-604.

In terms of biological role, essential for mating and for recognition of the mating pheromone, and for the determination of cell shape. Implicated in activation of the ras1 protein. This chain is Protein ral2 (ral2), found in Schizosaccharomyces pombe (strain 972 / ATCC 24843) (Fission yeast).